The sequence spans 732 residues: Ets DNA-binding protein pokkuri (732 aa).

The 85-residue stretch at 33–117 (SSQLAELKTQ…NVLQMLIIES (85 aa)) folds into the PNT domain. Residues 133–295 (SRYPLSPHSH…PPGTPILKDI (163 aa)) are disordered. Positions 141-157 (SHPPTPTWPPLNAPPEN) are enriched in pro residues. A compositionally biased stretch (polar residues) spans 176–193 (NSVTLSPPPSVDSQASSP). A compositionally biased stretch (low complexity) spans 205 to 240 (GAAPGSAGGSAPAAGGATNTSNPTSSSASSTGSNGS). A DNA-binding region (ETS) is located at residues 396 to 479 (RLLWDFLQQL…QGERHCYQFL (84 aa)). Disordered stretches follow at residues 496–548 (QSTP…NGPM), 590–647 (GPPP…TATS), and 674–732 (VAAS…HMQQ). A compositionally biased stretch (low complexity) spans 506-539 (SPSMPQGSSQAPGSPAGQNWNPQQQSQQQQQSPQ). Ser543 is modified (phosphoserine). Over residues 637 to 647 (LSVSSKSTATS) the composition is skewed to polar residues. Phosphoserine occurs at positions 677, 682, and 696. The span at 690 to 709 (AGASNASSSPRPMDQASEQA) shows a compositional bias: polar residues.

It belongs to the ETS family. Phosphorylated in response to MAPK signaling. May be phosphorylated by rl. As to expression, expressed in R7 and cone cells of the eye.

It is found in the nucleus. In terms of biological role, ets-related protein that functions as a negative regulator of photoreceptor development acting antagonistically to pnt and the proneural signal mediated by RAS. It acts upstream of SINA to inhibit R7 development. The chain is Ets DNA-binding protein pokkuri (aop) from Drosophila melanogaster (Fruit fly).